Consider the following 356-residue polypeptide: tRNA N6-adenosine threonylcarbamoyltransferase (356 aa).

The Fe cation site is built by His115 and His119. Substrate is bound by residues 138–142 (LVSGG), Asp171, Gly184, and Asn283. Asp311 is a binding site for Fe cation.

Belongs to the KAE1 / TsaD family. Requires Fe(2+) as cofactor.

The protein resides in the cytoplasm. It catalyses the reaction L-threonylcarbamoyladenylate + adenosine(37) in tRNA = N(6)-L-threonylcarbamoyladenosine(37) in tRNA + AMP + H(+). Its function is as follows. Required for the formation of a threonylcarbamoyl group on adenosine at position 37 (t(6)A37) in tRNAs that read codons beginning with adenine. Is involved in the transfer of the threonylcarbamoyl moiety of threonylcarbamoyl-AMP (TC-AMP) to the N6 group of A37, together with TsaE and TsaB. TsaD likely plays a direct catalytic role in this reaction. The sequence is that of tRNA N6-adenosine threonylcarbamoyltransferase from Prochlorococcus marinus (strain MIT 9312).